A 146-amino-acid polypeptide reads, in one-letter code: MSDIQLNTLKPAEGAKHAKRRVGRGIGSGLGKTAGRGHKGQKSRSGGFHKVGFEGGQMPLQRRLPKRGFTPLGQHLYAEVRLSDLQALPVDEIDVQTLKAAGVVGQAVRYAKVIKSGELSRKVTLKGLTATAGARAAIEAAGGSLA.

Residues 1-65 are disordered; sequence MSDIQLNTLK…GQMPLQRRLP (65 aa). Gly residues predominate over residues 24-34; that stretch reads RGIGSGLGKTA.

The protein belongs to the universal ribosomal protein uL15 family. Part of the 50S ribosomal subunit.

Functionally, binds to the 23S rRNA. The sequence is that of Large ribosomal subunit protein uL15 from Bordetella petrii (strain ATCC BAA-461 / DSM 12804 / CCUG 43448).